A 369-amino-acid polypeptide reads, in one-letter code: Ribosome-interacting GTPase 1 (369 aa).

Ser2 is subject to N-acetylserine. In terms of domain architecture, OBG-type G spans 66 to 292 (ASVGFVGFPS…LLQVMWDRLN (227 aa)). GTP-binding positions include 72-79 (GFPSVGKS), 118-122 (DLPGI), and 250-253 (NKID). The TGS domain maps to 292–368 (NLVRIYTKPK…EDEDVVTILK (77 aa)).

This sequence belongs to the TRAFAC class OBG-HflX-like GTPase superfamily. OBG GTPase family. In terms of assembly, associates with translating polyribosomes. Interacts with GIR2, TMA46, YAP1 and YGR250C.

The protein localises to the cytoplasm. Involved in ribosomal function. In Saccharomyces cerevisiae (strain ATCC 204508 / S288c) (Baker's yeast), this protein is Ribosome-interacting GTPase 1 (RBG1).